We begin with the raw amino-acid sequence, 138 residues long: Acidic phospholipase A2 Tbo-E6 (138 aa).

The N-terminal stretch at 1-16 (MRTLWILAVLLLGVKG) is a signal peptide. 7 disulfides stabilise this stretch: cysteine 42–cysteine 131, cysteine 44–cysteine 60, cysteine 59–cysteine 111, cysteine 65–cysteine 138, cysteine 66–cysteine 104, cysteine 73–cysteine 97, and cysteine 91–cysteine 102. Ca(2+) is bound by residues tyrosine 43, glycine 45, and glycine 47. Histidine 63 is an active-site residue. Aspartate 64 contributes to the Ca(2+) binding site. The active site involves aspartate 105.

As to quaternary structure, monomer. The cofactor is Ca(2+). As to expression, expressed by the venom gland.

It is found in the secreted. It carries out the reaction a 1,2-diacyl-sn-glycero-3-phosphocholine + H2O = a 1-acyl-sn-glycero-3-phosphocholine + a fatty acid + H(+). Functionally, snake venom phospholipase A2 (PLA2) that impairs hemostasis. It weakly inhibits ADP-induced platelet aggregation when tested on platelet rich plasma from human and rabbit blood (15-25% of inhibition at 5-10 ug of enzyme), and dose-dependently inhibits blood coagulation, possibly by inhibiting thrombin activation. Exhibits high hydrolytic activities toward L-dipalmitoyl phosphatidylcholine. PLA2 catalyzes the calcium-dependent hydrolysis of the 2-acyl groups in 3-sn-phosphoglycerides. This is Acidic phospholipase A2 Tbo-E6 from Craspedocephalus borneensis (Borneo pit viper).